Here is a 2590-residue protein sequence, read N- to C-terminus: DNA polymerase theta (2590 aa).

Over residues 1–12 (MNLLRRSGKRRR) the composition is skewed to basic residues. The interval 1 to 33 (MNLLRRSGKRRRSESGSDSFSGSGGDSSASPQF) is disordered. Residues 16–30 (GSDSFSGSGGDSSAS) are compositionally biased toward low complexity. Residues Q96 and 115 to 122 (APTSAGKT) each bind ATP. In terms of domain architecture, Helicase ATP-binding spans 102 to 286 (LGQVLEGKNL…WLNAELYHTD (185 aa)). The segment at 102 to 554 (LGQVLEGKNL…STSQDMHTYA (453 aa)) is helicase activity. Residues 216 to 219 (DELH) carry the DEAH box motif. In terms of domain architecture, Helicase C-terminal spans 321-554 (GDEDHVVSLC…STSQDMHTYA (234 aa)). The interaction with RAD51 stretch occupies residues 847 to 894 (DEEEEAVEERRNMRTIWVTGRKGLTEREAAALIVEEARMILQQDLVEM). An N6-acetyllysine modification is found at K990. The disordered stretch occupies residues 1034 to 1060 (KMSRSFRSWKRRKHLKRSRDSSPLKDS). Basic residues predominate over residues 1040 to 1050 (RSWKRRKHLKR). S1289, S1482, S1486, S1488, S1493, S1555, and S1563 each carry phosphoserine; by PLK1. Positions 1594–1622 (SDPVLDEHHQGDQDGGDQDERAEKSKLTG) are disordered. Basic and acidic residues predominate over residues 1598-1619 (LDEHHQGDQDGGDQDERAEKSK). S1628 and S1635 each carry phosphoserine; by PLK1. T1755 carries the phosphothreonine; by PLK1 modification. Positions 1777-1797 (PSDIKNHDLSPGSRNGFKDNS) are disordered. A DNA polymerase activity region spans residues 2097–2584 (AECESQKHIM…KVKIGASWGE (488 aa)). 2 loop regions span residues 2142–2177 (KLPPNREMKNQGSKKTLGSTRRGIDNGRKLRLGRQF) and 2257–2322 (EIKM…VPFP). Residues D2330 and Y2331 each coordinate Mg(2+). The tract at residues 2491-2535 (QLETFHSTFKSHGHREGMLQSDQTGLSRKRKLQGMFCPIRGGFFI) is loop 3. D2540 is a Mg(2+) binding site.

Belongs to the DNA polymerase type-A family. Homomultimer; forms homodimers and homotetramers. Interacts with RAD51. Interacts with ORC2 and ORC4. Interacts with RHNO1; interaction takes place during mitosis and promotes POLQ recruitment to DNA damage sites. Interacts (when phosphorylated) with TOPBP1 (via BRCT domains 7 and 8); promoting POLQ recruitment to DNA damage sites. It depends on Mg(2+) as a cofactor. Post-translationally, phosphorylated by PLK1; promoting interaction with TOPBP1 and recruitment to DNA damage sites. As to expression, highly expressed in testis.

It localises to the nucleus. Its subcellular location is the chromosome. It carries out the reaction DNA(n) + a 2'-deoxyribonucleoside 5'-triphosphate = DNA(n+1) + diphosphate. It catalyses the reaction ATP + H2O = ADP + phosphate + H(+). Its activity is regulated as follows. Specifically inhibited by the antibiotic novobiocin. The polymerase activity is specifically inhibited by the small molecule ART558. Novobiocin and ART558 confer specific killing of BRCA1/2-deficient cells and synergize with the poly [ADP-ribose] polymerase (PARP) inhibitor olaparib. Low-fidelity DNA polymerase with a helicase activity that promotes microhomology-mediated end-joining (MMEJ), an alternative non-homologous end-joining (NHEJ) machinery required to repair double-strand breaks in DNA during mitosis. MMEJ is an error-prone repair pathway that produces deletions of sequences from the strand being repaired and promotes genomic rearrangements, such as telomere fusions, some of them leading to cellular transformation. MMEJ is required during mitosis to repair persistent double-strand breaks that originate in S-phase. Although error-prone, MMEJ protects against chromosomal instability and tumorigenesis. The polymerase acts by binding directly the 2 ends of resected double-strand breaks, allowing microhomologous sequences in the overhangs to form base pairs. It then extends each strand from the base-paired region using the opposing overhang as a template. Requires partially resected DNA containing 2 to 6 base pairs of microhomology to perform MMEJ. The polymerase lacks proofreading activity and is highly promiscuous: unlike most polymerases, promotes extension of ssDNA and partial ssDNA (pssDNA) substrates. When the ends of a break do not contain terminal microhomology must identify embedded complementary sequences through a scanning step. Also acts as a DNA helicase, promoting dissociation of the replication protein A complex (RPA/RP-A), composed of RPA1, RPA2 and RPA3, from resected double-strand breaks to allow their annealing and subsequent joining by MMEJ. Removal of RPA/RP-A complex proteins prevents RAD51 accumulation at resected ends, thereby inhibiting homology-recombination repair (HR) pathway. Also shows RNA-directed DNA polymerase activity to mediate DNA repair in vitro; however this activity needs additional evidence in vivo. May also have lyase activity. Involved in somatic hypermutation of immunoglobulin genes, a process that requires the activity of DNA polymerases to ultimately introduce mutations at both A/T and C/G base pairs. POLQ-mediated end joining activity is involved in random integration of exogenous DNA hampers. The chain is DNA polymerase theta from Homo sapiens (Human).